A 95-amino-acid polypeptide reads, in one-letter code: Integration host factor subunit beta (95 aa).

Belongs to the bacterial histone-like protein family. As to quaternary structure, heterodimer of an alpha and a beta chain.

Functionally, this protein is one of the two subunits of integration host factor, a specific DNA-binding protein that functions in genetic recombination as well as in transcriptional and translational control. This chain is Integration host factor subunit beta, found in Psychromonas ingrahamii (strain DSM 17664 / CCUG 51855 / 37).